A 424-amino-acid polypeptide reads, in one-letter code: Serine--tRNA ligase (424 aa).

Residue 230–232 (TAE) coordinates L-serine. 261-263 (RSE) lines the ATP pocket. An L-serine-binding site is contributed by glutamate 284. Residue 348–351 (EISS) coordinates ATP. Serine 384 provides a ligand contact to L-serine.

The protein belongs to the class-II aminoacyl-tRNA synthetase family. Type-1 seryl-tRNA synthetase subfamily. As to quaternary structure, homodimer. The tRNA molecule binds across the dimer.

The protein localises to the cytoplasm. The catalysed reaction is tRNA(Ser) + L-serine + ATP = L-seryl-tRNA(Ser) + AMP + diphosphate + H(+). It catalyses the reaction tRNA(Sec) + L-serine + ATP = L-seryl-tRNA(Sec) + AMP + diphosphate + H(+). It functions in the pathway aminoacyl-tRNA biosynthesis; selenocysteinyl-tRNA(Sec) biosynthesis; L-seryl-tRNA(Sec) from L-serine and tRNA(Sec): step 1/1. Catalyzes the attachment of serine to tRNA(Ser). Is also able to aminoacylate tRNA(Sec) with serine, to form the misacylated tRNA L-seryl-tRNA(Sec), which will be further converted into selenocysteinyl-tRNA(Sec). This chain is Serine--tRNA ligase, found in Streptococcus pneumoniae serotype 2 (strain D39 / NCTC 7466).